A 912-amino-acid polypeptide reads, in one-letter code: MATSQTSQTVAAHVPFADLCSTLERIQKSKERAEKIRHFKEFLDSWRKFHDALHKNKKDVTDSFYPAMRLILPQLERERMAYGIKETMLAKLYIELLNLPREGKDALKLLNYRTPSGARTDAGDFAVIAYFVLKPRCLQKGSLTIQQVNELLDLVASNNSGKRKDLVKKSLLQLITQSSALEQKWLIRMIIKDLKLGVSQQTILNIFHNDAVELHNVTTDLEKVCRQLHDPAVGLSDISITLFSAFKPMLAAVADVERVEKDMKQQSFYIETKLDGERMQMHKDGSVYQYFSRNGYNYTDQFGASPQEGTLTPFIHDAFRTDVQVCILDGEMMAYNPTTQTFMQKGVKFDIKRMVEDSDLQTCYCVFDVLMVNNKKLGRETLRKRYDILNSTFTPIQGRIEIVQKKLAQTKNEVVDALNEAIDKREEGIMIKHPLSIYKPDKRGEGWLKIKPEYVSGLMDELDLLIVGGYWGKGSRGGMMSHFLCAVAEKPPHGEKPSVFHTLCRVGSGYTMKELYDLGLKLAKYWKPFHKKSPPSSILCGTEKPEVYIEPCNSVIVQIKAAEIVPSDMYKTGTTLRFPRIEKIRDDKEWHECMTLGDLEELRGKASGKLATKHLHVGDDDEPREKRRKPVSKMKKTIGIIEHLKAPNLSNISKVSNVFEDVEFCVMSGLDGYPKSDLENRIAEFGGYIVQNPGPDTYCVIAGCENIRVKNIISSDQHDVVKPEWLLECFKTKTCVPWQPRFMIHMCPSTKQHFAREYDCYGDSYFVDTDLDQLKEVFLGIKKAGEHQTPEEMAPVIADLEYRYSWDHSPLCMFRHCTVYLDLYAVINDSSSKIKATRLDVTALELRFHGAKVVSHLSEGVSHVIIGENQSRVSDFKVFRRTLKKKFKILQERWVTDSVDKGELQEENQYLL.

Residues Glu271, Thr272, Lys273, Leu274, Arg278, Glu331, Lys345, Phe367, Glu427, Lys432, Lys449, and Lys451 each contribute to the ATP site. The N6-AMP-lysine intermediate role is filled by Lys273. Glu331 is a Mg(2+) binding site. Residue Glu427 participates in Mg(2+) binding. The interval 610–620 is required for catalytic activity; that stretch reads LATKHLHVGDD. BRCT domains lie at 654–743 and 846–912; these read KVSN…PRFM and LRFH…QYLL.

Belongs to the ATP-dependent DNA ligase family. Interacts with XRCC4; the LIG4-XRCC4 subcomplex has a 1:2 stoichiometry and XRCC4 is required for LIG4 stability. Component of the core long-range non-homologous end joining (NHEJ) complex (also named DNA-PK complex) composed of PRKDC, LIG4, XRCC4, XRCC6/Ku70, XRCC5/Ku86 and NHEJ1/XLF. Additional component of the NHEJ complex includes PAXX. Following autophosphorylation, PRKDC dissociates from DNA, leading to formation of the short-range NHEJ complex, composed of LIG4, XRCC4, XRCC6/Ku70, XRCC5/Ku86 and NHEJ1/XLF. Interacts with DCLRE1C; the interaction is direct. Interacts with APLF. Mg(2+) is required as a cofactor.

It localises to the nucleus. It catalyses the reaction ATP + (deoxyribonucleotide)n-3'-hydroxyl + 5'-phospho-(deoxyribonucleotide)m = (deoxyribonucleotide)n+m + AMP + diphosphate.. Its function is as follows. DNA ligase involved in DNA non-homologous end joining (NHEJ); required for double-strand break (DSB) repair and V(D)J recombination. Catalyzes the NHEJ ligation step of the broken DNA during DSB repair by resealing the DNA breaks after the gap filling is completed. Joins single-strand breaks in a double-stranded polydeoxynucleotide in an ATP-dependent reaction. LIG4 is mechanistically flexible: it can ligate nicks as well as compatible DNA overhangs alone, while in the presence of XRCC4, it can ligate ends with 2-nucleotides (nt) microhomology and 1-nt gaps. Forms a subcomplex with XRCC4; the LIG4-XRCC4 subcomplex is responsible for the NHEJ ligation step and XRCC4 enhances the joining activity of LIG4. Binding of the LIG4-XRCC4 complex to DNA ends is dependent on the assembly of the DNA-dependent protein kinase complex DNA-PK to these DNA ends. LIG4 regulates nuclear localization of XRCC4. This chain is DNA ligase 4, found in Cricetulus griseus (Chinese hamster).